The sequence spans 573 residues: 3-oxosteroid 1-dehydrogenase (573 aa).

7 to 36 (DLIVVGSGAGACWAPIRAQEQGLKTLVVEK) contributes to the FAD binding site.

It belongs to the FAD-dependent oxidoreductase 2 family. 3-oxosteroid dehydrogenase subfamily. Requires FAD as cofactor.

The protein localises to the cell inner membrane. It carries out the reaction a 3-oxosteroid + A = a 3-oxo-Delta(1)-steroid + AH2. It functions in the pathway lipid metabolism; steroid degradation. Its function is as follows. Dehydrogenates steroids by introducing a double bond in steroid ring A. This is 3-oxosteroid 1-dehydrogenase from Comamonas testosteroni (Pseudomonas testosteroni).